A 369-amino-acid polypeptide reads, in one-letter code: Anhydro-N-acetylmuramic acid kinase (369 aa).

12 to 19 (GTSMDGVD) is an ATP binding site.

Belongs to the anhydro-N-acetylmuramic acid kinase family.

It carries out the reaction 1,6-anhydro-N-acetyl-beta-muramate + ATP + H2O = N-acetyl-D-muramate 6-phosphate + ADP + H(+). Its pathway is amino-sugar metabolism; 1,6-anhydro-N-acetylmuramate degradation. The protein operates within cell wall biogenesis; peptidoglycan recycling. Its function is as follows. Catalyzes the specific phosphorylation of 1,6-anhydro-N-acetylmuramic acid (anhMurNAc) with the simultaneous cleavage of the 1,6-anhydro ring, generating MurNAc-6-P. Is required for the utilization of anhMurNAc either imported from the medium or derived from its own cell wall murein, and thus plays a role in cell wall recycling. The chain is Anhydro-N-acetylmuramic acid kinase from Shewanella baltica (strain OS155 / ATCC BAA-1091).